A 444-amino-acid chain; its full sequence is Glutamate--methylamine ligase (444 aa).

The GS beta-grasp domain maps to 14–97 (HHVKYVLAQF…LVCDGHVNGK (84 aa)). The GS catalytic domain occupies 103 to 444 (TRVVLKQQIA…WEINRYVQFY (342 aa)).

It belongs to the glutamine synthetase family. Type 3 subfamily. Mg(2+) serves as cofactor.

It catalyses the reaction methylamine + L-glutamate + ATP = N(5)-methyl-L-glutamine + ADP + phosphate + H(+). It carries out the reaction ethylamine + L-glutamate + ATP = N(5)-ethyl-L-glutamine + ADP + phosphate + H(+). Formation of theanine is repressed by a high concentration of glutamic acid. Catalyzes the formation of N(5)-methyl-L-glutamine from glutamate and methylamine. In vitro, can also use ethylamine, hydroxylamine and ammonia, with 75%, 40% and 1% activity compared to methylamine, respectively. This is Glutamate--methylamine ligase from Methylovorus mays.